The following is a 360-amino-acid chain: Dynein intermediate light chain dil1 (360 aa).

The protein belongs to the dynein light intermediate chain DYN3 family. As to quaternary structure, the dynein complex consists of at least two heavy chains and a number of intermediate and light chains. Interacts with rga3, sec10, sec16, syp1, rvb2, spbc19c7.04c, spbc2f12.05 and spac3a11.10c. The N-terminal part is acetylated.

It is found in the cytoplasm. The protein resides in the cytoskeleton. In terms of biological role, component of the cytoplasmic dynein which acts as a motor for the intracellular retrograde motility of vesicles and organelles along microtubules. Promotes oscillatory nuclear movement and efficient pairing of homologous centromeres during meiotic prophase. This Schizosaccharomyces pombe (strain 972 / ATCC 24843) (Fission yeast) protein is Dynein intermediate light chain dil1 (dil1).